Reading from the N-terminus, the 445-residue chain is 3-phosphoshikimate 1-carboxyvinyltransferase (445 aa).

Residues Lys21, Ser22, and Arg26 each coordinate 3-phosphoshikimate. Residue Lys21 coordinates phosphoenolpyruvate. 2 residues coordinate phosphoenolpyruvate: Gly92 and Arg120. 3-phosphoshikimate is bound by residues Ser165, Gln166, Asp307, and Lys334. Gln166 contributes to the phosphoenolpyruvate binding site. Catalysis depends on Asp307, which acts as the Proton acceptor. Residues Arg338, Arg379, and Lys405 each contribute to the phosphoenolpyruvate site.

It belongs to the EPSP synthase family. In terms of assembly, monomer.

The protein resides in the cytoplasm. The enzyme catalyses 3-phosphoshikimate + phosphoenolpyruvate = 5-O-(1-carboxyvinyl)-3-phosphoshikimate + phosphate. It functions in the pathway metabolic intermediate biosynthesis; chorismate biosynthesis; chorismate from D-erythrose 4-phosphate and phosphoenolpyruvate: step 6/7. Its function is as follows. Catalyzes the transfer of the enolpyruvyl moiety of phosphoenolpyruvate (PEP) to the 5-hydroxyl of shikimate-3-phosphate (S3P) to produce enolpyruvyl shikimate-3-phosphate and inorganic phosphate. The polypeptide is 3-phosphoshikimate 1-carboxyvinyltransferase (Chlamydia felis (strain Fe/C-56) (Chlamydophila felis)).